Consider the following 882-residue polypeptide: Alanine--tRNA ligase (882 aa).

H568, H572, C670, and H674 together coordinate Zn(2+).

The protein belongs to the class-II aminoacyl-tRNA synthetase family. The cofactor is Zn(2+).

It is found in the cytoplasm. It carries out the reaction tRNA(Ala) + L-alanine + ATP = L-alanyl-tRNA(Ala) + AMP + diphosphate. In terms of biological role, catalyzes the attachment of alanine to tRNA(Ala) in a two-step reaction: alanine is first activated by ATP to form Ala-AMP and then transferred to the acceptor end of tRNA(Ala). Also edits incorrectly charged Ser-tRNA(Ala) and Gly-tRNA(Ala) via its editing domain. The polypeptide is Alanine--tRNA ligase (Lactobacillus gasseri (strain ATCC 33323 / DSM 20243 / BCRC 14619 / CIP 102991 / JCM 1131 / KCTC 3163 / NCIMB 11718 / NCTC 13722 / AM63)).